The primary structure comprises 1941 residues: Integrin beta-like protein B (1941 aa).

Residues M1 to A20 form the signal peptide. The Extracellular segment spans residues T21–T1871. The 38-residue stretch at Y420 to S457 folds into the EGF-like domain. 2 disulfides stabilise this stretch: C430/C445 and C447/C456. One can recognise a VWFA domain in the interval D513–L696. N-linked (GlcNAc...) asparagine glycosylation is found at N1400, N1505, N1530, N1606, N1652, N1738, N1777, N1848, N1866, and N1869. The chain crosses the membrane as a helical span at residues V1872–W1892. Residues K1893–L1941 lie on the Cytoplasmic side of the membrane. A disordered region spans residues M1921–L1941.

This sequence belongs to the SIB family. As to quaternary structure, interacts with talA/talin.

It localises to the membrane. In terms of biological role, implicated in cellular adhesion. This chain is Integrin beta-like protein B (sibB), found in Dictyostelium discoideum (Social amoeba).